The sequence spans 211 residues: FMN-dependent NADH:quinone oxidoreductase 3 (211 aa).

Residue 102 to 105 coordinates FMN; that stretch reads MWNF.

This sequence belongs to the azoreductase type 1 family. In terms of assembly, homodimer. The cofactor is FMN.

The catalysed reaction is 2 a quinone + NADH + H(+) = 2 a 1,4-benzosemiquinone + NAD(+). It carries out the reaction N,N-dimethyl-1,4-phenylenediamine + anthranilate + 2 NAD(+) = 2-(4-dimethylaminophenyl)diazenylbenzoate + 2 NADH + 2 H(+). Its function is as follows. Quinone reductase that provides resistance to thiol-specific stress caused by electrophilic quinones. In terms of biological role, also exhibits azoreductase activity. Catalyzes the reductive cleavage of the azo bond in aromatic azo compounds to the corresponding amines. The chain is FMN-dependent NADH:quinone oxidoreductase 3 from Bacillus cereus (strain ATCC 10987 / NRS 248).